The chain runs to 343 residues: tRNA N6-adenosine threonylcarbamoyltransferase (343 aa).

Positions 112 and 116 each coordinate Fe cation. Residues 135-139 (LVSGG), Asp-168, Gly-181, and Asn-273 each bind substrate. Asp-301 contacts Fe cation.

This sequence belongs to the KAE1 / TsaD family. The cofactor is Fe(2+).

Its subcellular location is the cytoplasm. It catalyses the reaction L-threonylcarbamoyladenylate + adenosine(37) in tRNA = N(6)-L-threonylcarbamoyladenosine(37) in tRNA + AMP + H(+). Its function is as follows. Required for the formation of a threonylcarbamoyl group on adenosine at position 37 (t(6)A37) in tRNAs that read codons beginning with adenine. Is involved in the transfer of the threonylcarbamoyl moiety of threonylcarbamoyl-AMP (TC-AMP) to the N6 group of A37, together with TsaE and TsaB. TsaD likely plays a direct catalytic role in this reaction. The chain is tRNA N6-adenosine threonylcarbamoyltransferase from Azoarcus sp. (strain BH72).